Reading from the N-terminus, the 585-residue chain is MVLPELLVILAEWVLYRLLAKSCYRAARKLRGYGFQLKNLLSLSKTQSLHNNSQHHLHNHHQQNHPNQTLQDSLDPLFPSLTKYQELLLDKNRACSVSSDHYRDTFFCDIDGVLLRQHSSKHFHTFFPYFMLVAFEGGSIIRAILLLLSCSFLWTLQQETKLRVLSFITFSGLRVKDMDNVSRSVLPKFFLENLNIQVYDIWARTEYSKVVFTSLPQVLVERFLREHLNADDVIGTKLQEIKVMGRKFYTGLASGSGFVLKHKSAEDYFFDSKKKPALGIGSSSSPQDHIFISICKEAYFWNEEESMSKNNALPRERYPKPLIFHDGRLAFLPTPLATLAMFIWLPIGFLLAVFRISVGVFLPYHVANFLASMSGVRITFKTHNLNNGRPEKGNSGVLYVCNHRTLLDPVFLTTSLGKPLTAVTYSLSKFSEFIAPLKTVSLKRDRKKDGEAMQRLLSKGDLVVCPEGTTCREPYLLRFSPLFAELTEDIVPVAVDARVSMFYGTTASGLKCLDPIFFLMNPRPVYCLEILKKLPKEMTCAGGKSSFEVANFIQGELARVLGFECTNLTRRDKYLVLAGNEGIVR.

A run of 3 helical transmembrane segments spans residues 126 to 146, 334 to 354, and 356 to 376; these read FFPY…AILL, TPLA…LAVF, and ISVG…MSGV. An HXXXXD motif motif is present at residues 403–408; it reads HRTLLD.

Belongs to the GPAT/DAPAT family. As to expression, highly expressed in developing siliques and flower buds. Weakly or not expressed in roots, seedlings and leaves.

It localises to the membrane. The protein resides in the mitochondrion. The catalysed reaction is sn-glycerol 3-phosphate + an acyl-CoA = a 1-acyl-sn-glycero-3-phosphate + CoA. Its pathway is phospholipid metabolism; CDP-diacylglycerol biosynthesis; CDP-diacylglycerol from sn-glycerol 3-phosphate: step 1/3. Its function is as follows. Esterifies acyl-group from acyl-ACP to the sn-1 position of glycerol-3-phosphate, an essential step in glycerolipid biosynthesis. Involved in pollen development, by being required for tapetum differentiation and male fertility. In addition to the sporophytic effect, it also exerts a gametophytic effect on pollen performance. This chain is Glycerol-3-phosphate acyltransferase 1 (GPAT1), found in Arabidopsis thaliana (Mouse-ear cress).